The chain runs to 122 residues: Large ribosomal subunit protein bL12 (122 aa).

Belongs to the bacterial ribosomal protein bL12 family. As to quaternary structure, homodimer. Part of the ribosomal stalk of the 50S ribosomal subunit. Forms a multimeric L10(L12)X complex, where L10 forms an elongated spine to which 2 to 4 L12 dimers bind in a sequential fashion. Binds GTP-bound translation factors.

Functionally, forms part of the ribosomal stalk which helps the ribosome interact with GTP-bound translation factors. Is thus essential for accurate translation. This is Large ribosomal subunit protein bL12 from Acinetobacter baumannii (strain AB0057).